Here is a 293-residue protein sequence, read N- to C-terminus: Bifunctional protein FolD (293 aa).

NADP(+) is bound by residues 165–167 (GRS), Ser190, and Ile231.

It belongs to the tetrahydrofolate dehydrogenase/cyclohydrolase family. As to quaternary structure, homodimer.

The catalysed reaction is (6R)-5,10-methylene-5,6,7,8-tetrahydrofolate + NADP(+) = (6R)-5,10-methenyltetrahydrofolate + NADPH. It catalyses the reaction (6R)-5,10-methenyltetrahydrofolate + H2O = (6R)-10-formyltetrahydrofolate + H(+). The protein operates within one-carbon metabolism; tetrahydrofolate interconversion. Functionally, catalyzes the oxidation of 5,10-methylenetetrahydrofolate to 5,10-methenyltetrahydrofolate and then the hydrolysis of 5,10-methenyltetrahydrofolate to 10-formyltetrahydrofolate. The polypeptide is Bifunctional protein FolD (Synechococcus sp. (strain WH7803)).